We begin with the raw amino-acid sequence, 419 residues long: Synaptotagmin-1 (419 aa).

Topologically, residues 1–57 (MVSESHHEALAAPPVTTVATVLPSNATEPASPGEGKEDAFSKLKEKFMNELHKIPLP) are vesicular. N-linked (GlcNAc...) asparagine glycosylation is present at Asn25. Residues 58-80 (PWALIAIAIVAVLLVLTCCFCIC) traverse the membrane as a helical segment. 5 S-palmitoyl cysteine lipidation sites follow: Cys75, Cys76, Cys78, Cys80, and Cys83. The Cytoplasmic segment spans residues 81–419 (KKCLFKKKNK…EVDAMLAVKK (339 aa)). The segment at 108 to 139 (KDLGKTMKDQDDDAETGLTDGEEKEEPKEEEK) is disordered. Residues 117–131 (QDDDAETGLTDGEEK) show a composition bias toward acidic residues. Thr126 is modified (phosphothreonine). The segment at 133 to 379 (EPKEEEKLGK…AIGKVFVGYN (247 aa)) is phospholipid binding. Residues 139–258 (KLGKLQYSLD…DFGHVTEEWR (120 aa)) enclose the C2 1 domain. 3 residues coordinate Ca(2+): Leu169, Asp170, and Asp176. Tyr227 is subject to Phosphotyrosine. Asp228, Phe229, Asp230, Ser233, Lys234, and Asp236 together coordinate Ca(2+). Ser262 is modified (phosphoserine). A C2 2 domain is found at 270–403 (KLGDICFSLR…NPRRPIAQWH (134 aa)). The Ca(2+) site is built by Asp301 and Asp307. Ser340 and Ser342 each carry phosphoserine. The Ca(2+) site is built by Asp361, Asp363, and Asp369.

Belongs to the synaptotagmin family. As to quaternary structure, homotetramer. Heterodimer; heterodimerizes with SYT2 in presence of calcium. Interacts with SCAMP5. Interacts with STON2. Forms a complex with SV2B, syntaxin 1 and SNAP25. Interacts with SV2A, SV2B and SV2C. Interacts with RIMS1. Interacts with PRRT2. Interacts with DNAJC5 in a phosphorylation-dependent manner. Interacts (via N-terminus) with RAB3A. Interacts with SYT12. Interacts with calmodulin. Interacts with DNM1 (via C-terminal proline-rich domain (PRD)); this interaction facilitates vesicle fission during clathrin-mediated endocytosis (CME). The cofactor is Ca(2+). Glycosylated.

It localises to the cytoplasmic vesicle. The protein localises to the secretory vesicle membrane. It is found in the secretory vesicle. The protein resides in the synaptic vesicle membrane. Its subcellular location is the chromaffin granule membrane. It localises to the cytoplasm. Functionally, calcium sensor that participates in triggering neurotransmitter release at the synapse. May have a regulatory role in the membrane interactions during trafficking of synaptic vesicles at the active zone of the synapse. It binds acidic phospholipids with a specificity that requires the presence of both an acidic head group and a diacyl backbone. A Ca(2+)-dependent interaction between synaptotagmin and putative receptors for activated protein kinase C has also been reported. It can bind to at least three additional proteins in a Ca(2+)-independent manner; these are neurexins, syntaxin and AP2. Plays a role in dendrite formation by melanocytes. This chain is Synaptotagmin-1, found in Macaca fascicularis (Crab-eating macaque).